Reading from the N-terminus, the 536-residue chain is uncharacterized protein (536 aa).

Residues L71–Y98 form an SWIM-type zinc finger. Positions Y482–K528 form a coiled coil.

This is an uncharacterized protein from Bacillus subtilis (strain 168).